We begin with the raw amino-acid sequence, 333 residues long: uncharacterized protein (333 aa).

It belongs to the polysaccharide synthase family.

This is an uncharacterized protein from Methanocaldococcus jannaschii (strain ATCC 43067 / DSM 2661 / JAL-1 / JCM 10045 / NBRC 100440) (Methanococcus jannaschii).